We begin with the raw amino-acid sequence, 217 residues long: Proteasome subunit beta (217 aa).

The propeptide at 1 to 14 (MIANNDQYKEYMKG) is removed in mature form; by autocatalysis. Threonine 15 serves as the catalytic Nucleophile.

It belongs to the peptidase T1B family. The 20S proteasome core is composed of 14 alpha and 14 beta subunits that assemble into four stacked heptameric rings, resulting in a barrel-shaped structure. The two inner rings, each composed of seven catalytic beta subunits, are sandwiched by two outer rings, each composed of seven alpha subunits. The catalytic chamber with the active sites is on the inside of the barrel. Has a gated structure, the ends of the cylinder being occluded by the N-termini of the alpha-subunits. Is capped at one or both ends by the proteasome regulatory ATPase, PAN.

Its subcellular location is the cytoplasm. The enzyme catalyses Cleavage of peptide bonds with very broad specificity.. Its activity is regulated as follows. The formation of the proteasomal ATPase PAN-20S proteasome complex, via the docking of the C-termini of PAN into the intersubunit pockets in the alpha-rings, triggers opening of the gate for substrate entry. Interconversion between the open-gate and close-gate conformations leads to a dynamic regulation of the 20S proteasome proteolysis activity. Functionally, component of the proteasome core, a large protease complex with broad specificity involved in protein degradation. The chain is Proteasome subunit beta from Methanococcus aeolicus (strain ATCC BAA-1280 / DSM 17508 / OCM 812 / Nankai-3).